We begin with the raw amino-acid sequence, 286 residues long: MTELTEGNTSKFAKISEKDLSDFLIHYNEAGEGEAVIMLHGGGPGAGGWSNYYRNIGPFVDAGYRVILKDSPGFNKSDVVVMDEQRGLVNARAVKGLMDALGIERAHLVGNSMGGATALNFAIEYPERLGKMILMGPGGLGASHFAPMPMEGIKLLFKLYAEPSYETLRQMIQVFLYDQTNITEELLQGRWEAIQRNPEHLKNFLVSAQRAPLSSWDVSPRLGEIKAKTLVTWGRDDRFVPLDHGLKLVWGIGDARLHVFSQCGHWAQWEKADEFNRLAIDFLRQR.

Residues 42–43, Asn-51, Asn-111, Thr-180, and Arg-190 contribute to the substrate site; that span reads GG. The Proton acceptor role is filled by His-265. Trp-266 contributes to the substrate binding site.

Belongs to the AB hydrolase superfamily. BphD family. In terms of assembly, homodimer.

The enzyme catalyses 2,6-dioxo-6-phenylhexa-3-enoate + H2O = 2-oxopent-4-enoate + benzoate + H(+). It functions in the pathway xenobiotic degradation; biphenyl degradation; 2-hydroxy-2,4-pentadienoate and benzoate from biphenyl: step 4/4. Its function is as follows. Catalyzes an unusual C-C bond hydrolysis of 2-hydroxy-6-oxo-6-phenylhexa-2,4-dienoic acid (HOPDA) to produce benzoic acid and 2-hydroxy-2,4-pentadienoic acid (HPD). The chain is 2-hydroxy-6-oxo-6-phenylhexa-2,4-dienoate hydrolase from Comamonas testosteroni (Pseudomonas testosteroni).